The following is a 576-amino-acid chain: uncharacterized protein (576 aa).

Over 1-8 (MSLSLGAA) the chain is Cytoplasmic. The chain crosses the membrane as a helical span at residues 9–29 (IYIALKPIFKIYTIMLVGYLV). Topologically, residues 30 to 45 (AKFDIVSMENAKGISN) are extracellular. The chain crosses the membrane as a helical span at residues 46 to 66 (MVVNAILPCLTFNKIVSNISW). At 67-71 (RDIKE) the chain is on the cytoplasmic side. A helical transmembrane segment spans residues 72–92 (IGVIILSAFILFVLGATGALF). Residues 93 to 103 (TTFATTVPKKF) lie on the Extracellular side of the membrane. A helical transmembrane segment spans residues 104–124 (FWGLIFAGFFPNISDLPIAYI). Residues 125-141 (QSMGNGSIFTAEEADKG) are Cytoplasmic-facing. The helical transmembrane segment at 142–162 (VAYSCIFLFIQSFLMMNFGMW) threads the bilayer. The Extracellular portion of the chain corresponds to 163 to 400 (RVVGLDFRDT…FIINCLRPAS (238 aa)). The helical transmembrane segment at 401–421 (LGAILGIICALIPWVKACFVT) threads the bilayer. At 422-437 (TYVHVHKAPDGEPVLN) the chain is on the cytoplasmic side. Residues 438–458 (FLMDFTEYIGNACVPLGLLLL) form a helical membrane-spanning segment. Over 459–476 (GGTLARLEIKSLPPGFIK) the chain is Extracellular. Residues 477–497 (SALLMTCFRLIVIPIIGVLWV) traverse the membrane as a helical segment. The Cytoplasmic portion of the chain corresponds to 498–512 (NKLYSIDWLDTGIGK). Residues 513–533 (FDMILTWSMPSATAQVYFTAF) form a helical membrane-spanning segment. Topologically, residues 534-545 (YTPACGDHIQMN) are extracellular. The chain crosses the membrane as a helical span at residues 546 to 566 (CLSVLFVMQYAILFITVAFVV). Residues 567–576 (TYTLKVDLKV) lie on the Cytoplasmic side of the membrane.

The protein belongs to the auxin efflux carrier (TC 2.A.69) family.

The protein localises to the membrane. This is an uncharacterized protein from Saccharomyces cerevisiae (strain ATCC 204508 / S288c) (Baker's yeast).